The chain runs to 130 residues: Small ribosomal subunit protein uS9 (130 aa).

The protein belongs to the universal ribosomal protein uS9 family.

This chain is Small ribosomal subunit protein uS9, found in Polaromonas sp. (strain JS666 / ATCC BAA-500).